The chain runs to 659 residues: Threonine--tRNA ligase (659 aa).

The 64-residue stretch at 7–70 folds into the TGS domain; the sequence is VQATVTVTFP…TDDATVEIIT (64 aa). Positions 255 to 557 are catalytic; it reads DHRKLGAELE…LIEHTAGNFP (303 aa). Residues cysteine 353, histidine 404, and histidine 534 each contribute to the Zn(2+) site.

It belongs to the class-II aminoacyl-tRNA synthetase family. In terms of assembly, homodimer. The cofactor is Zn(2+).

The protein localises to the cytoplasm. The catalysed reaction is tRNA(Thr) + L-threonine + ATP = L-threonyl-tRNA(Thr) + AMP + diphosphate + H(+). Catalyzes the attachment of threonine to tRNA(Thr) in a two-step reaction: L-threonine is first activated by ATP to form Thr-AMP and then transferred to the acceptor end of tRNA(Thr). Also edits incorrectly charged L-seryl-tRNA(Thr). This Chlorobium phaeobacteroides (strain BS1) protein is Threonine--tRNA ligase.